The following is a 200-amino-acid chain: Putative peroxiredoxin sll0755 (200 aa).

A Thioredoxin domain is found at 5 to 163; sequence LRVGQPAPDF…TLRVLKAIRH (159 aa). The active-site Cysteine sulfenic acid (-SOH) intermediate is Cys-50.

It belongs to the peroxiredoxin family. AhpC/Prx1 subfamily. Homodimer; disulfide-linked, upon oxidation.

The protein localises to the cytoplasm. It carries out the reaction a hydroperoxide + [thioredoxin]-dithiol = an alcohol + [thioredoxin]-disulfide + H2O. Thiol-specific peroxidase that catalyzes the reduction of hydrogen peroxide and organic hydroperoxides to water and alcohols, respectively. Plays a role in cell protection against oxidative stress by detoxifying peroxides. The polypeptide is Putative peroxiredoxin sll0755 (Synechocystis sp. (strain ATCC 27184 / PCC 6803 / Kazusa)).